The chain runs to 76 residues: Acyl carrier protein (76 aa).

The Carrier domain maps to 1–75; the sequence is MVFEKIKALI…DIVFYITKNT (75 aa). S35 carries the O-(pantetheine 4'-phosphoryl)serine modification.

The protein belongs to the acyl carrier protein (ACP) family. In terms of processing, 4'-phosphopantetheine is transferred from CoA to a specific serine of apo-ACP by AcpS. This modification is essential for activity because fatty acids are bound in thioester linkage to the sulfhydryl of the prosthetic group.

It localises to the cytoplasm. It functions in the pathway lipid metabolism; fatty acid biosynthesis. Functionally, carrier of the growing fatty acid chain in fatty acid biosynthesis. The polypeptide is Acyl carrier protein (Onion yellows phytoplasma (strain OY-M)).